The following is a 296-amino-acid chain: Coatomer subunit epsilon (296 aa).

The protein belongs to the COPE family. Oligomeric complex that consists of at least the alpha, beta, beta', gamma, delta, epsilon and zeta subunits. Interacts with the ESCRT-0 subunit VPS27.

Its subcellular location is the cytoplasm. The protein resides in the golgi apparatus membrane. It is found in the cytoplasmic vesicle. The protein localises to the COPI-coated vesicle membrane. Its function is as follows. The coatomer is a cytosolic protein complex that binds to dilysine motifs and reversibly associates with Golgi non-clathrin-coated vesicles, which further mediate biosynthetic protein transport from the ER, via the Golgi up to the trans Golgi network. The coatomer complex is required for budding from Golgi membranes, and is essential for the retrograde Golgi-to-ER transport of dilysine-tagged proteins. This is Coatomer subunit epsilon (SEC28) from Saccharomyces cerevisiae (strain ATCC 204508 / S288c) (Baker's yeast).